A 383-amino-acid polypeptide reads, in one-letter code: Delta(12)-fatty-acid desaturase (383 aa).

The tract at residues 1–24 is disordered; the sequence is MGAGGRMPVPTSSKKSETDTTKRV. A compositionally biased stretch (basic and acidic residues) spans 14 to 24; sequence KKSETDTTKRV. The helical transmembrane segment at 56–76 threads the bilayer; the sequence is LISDIIIASCFYYVATNYFSL. Positions 105 to 109 match the Histidine box-1 motif; the sequence is HECGH. Residues 117 to 137 form a helical membrane-spanning segment; sequence WLDDTVGLIFHSFLLVPYFSW. Positions 141 to 145 match the Histidine box-2 motif; that stretch reads HRRHH. Helical transmembrane passes span 179-199, 225-245, and 252-272; these read IMML…FNVS, IYLS…YAAA, and ICLY…ITYL. The Histidine box-3 motif lies at 315 to 319; sequence HVAHH.

The protein belongs to the fatty acid desaturase type 1 family. In terms of assembly, homo- and heterodimer. Interacts with FAD3 but not with FAD6. FAD2-FAD3 heterodimers can form a metabolic channel in which 18:1-PC is converted to 18:3-PC without releasing a free 18:2-PC intermediate. In terms of tissue distribution, expressed in shoots and roots. Expressed in leaves, stems, flowers and siliques.

The protein resides in the endoplasmic reticulum membrane. Its subcellular location is the microsome membrane. The enzyme catalyses (9Z)-octadecenoyl-CoA + 2 Fe(II)-[cytochrome b5] + O2 + 2 H(+) = (9Z,12Z)-octadecadienoyl-CoA + 2 Fe(III)-[cytochrome b5] + 2 H2O. The catalysed reaction is (9Z)-hexadecenoyl-CoA + 2 Fe(II)-[cytochrome b5] + O2 + 2 H(+) = (9Z,12Z)-hexadecadienoyl-CoA + 2 Fe(III)-[cytochrome b5] + 2 H2O. It catalyses the reaction a (9Z)-octadecenoyl-containing glycerolipid + 2 Fe(II)-[cytochrome b5] + O2 + 2 H(+) = a (9Z,12Z)-octadecadienoyl-containing glycerolipid + 2 Fe(III)-[cytochrome b5] + 2 H2O. It carries out the reaction (9Z)-octadecenoyl-CoA + AH2 + O2 = (9Z,12Z)-octadecadienoyl-CoA + A + 2 H2O. The enzyme catalyses (9Z)-hexadecenoyl-CoA + AH2 + O2 = (9Z,12Z)-hexadecadienoyl-CoA + A + 2 H2O. The catalysed reaction is (9Z)-tetradecenoyl-CoA + 2 Fe(II)-[cytochrome b5] + O2 + 2 H(+) = (9Z,12Z)-tetradecadienoyl-CoA + 2 Fe(III)-[cytochrome b5] + 2 H2O. It catalyses the reaction (9Z)-pentadecenoyl-CoA + 2 Fe(II)-[cytochrome b5] + O2 + 2 H(+) = (9Z,12Z)-pentadecadienoyl-CoA + 2 Fe(III)-[cytochrome b5] + 2 H2O. It carries out the reaction (9Z)-heptadecenoyl-CoA + 2 Fe(II)-[cytochrome b5] + O2 + 2 H(+) = (9Z,12Z)-heptadecadienoyl-CoA + 2 Fe(III)-[cytochrome b5] + 2 H2O. It functions in the pathway lipid metabolism; polyunsaturated fatty acid biosynthesis. Functionally, ER (microsomal) omega-6 fatty acid desaturase introduces the second double bond in the biosynthesis of 18:3 fatty acids, important constituents of plant membranes. Delta(12)-desaturase with regioselectivity determined by the double bond (delta(9) position) and carboxyl group of the substrate. Can use both 16:1 and 18:1 fatty acids as substrates. It is thought to use cytochrome b5 as an electron donor and to act on fatty acids esterified to phosphatidylcholine (PC) and, possibly, other phospholipids. Very low constitutive hydroxylation activity. Required for desaturation of fatty acids present in extraplastidial membranes, including mitochondria. Required for salt tolerance during seed germination and early seedling growth. The polypeptide is Delta(12)-fatty-acid desaturase (Arabidopsis thaliana (Mouse-ear cress)).